A 474-amino-acid polypeptide reads, in one-letter code: Ribosomal RNA small subunit methyltransferase F (474 aa).

S-adenosyl-L-methionine-binding positions include 121–127 (ASAPGSK), E145, D172, and D190. C243 serves as the catalytic Nucleophile.

It belongs to the class I-like SAM-binding methyltransferase superfamily. RsmB/NOP family.

The protein localises to the cytoplasm. It carries out the reaction cytidine(1407) in 16S rRNA + S-adenosyl-L-methionine = 5-methylcytidine(1407) in 16S rRNA + S-adenosyl-L-homocysteine + H(+). In terms of biological role, specifically methylates the cytosine at position 1407 (m5C1407) of 16S rRNA. This Shewanella piezotolerans (strain WP3 / JCM 13877) protein is Ribosomal RNA small subunit methyltransferase F.